The primary structure comprises 367 residues: Heme A synthase (367 aa).

The next 5 membrane-spanning stretches (helical) occupy residues 25–45 (ALRFWLGFVLLALFCLVLVGG), 111–131 (LIARAIGVIFALPLIYFWLTG), 139–159 (WPLVGILALGGLQGGIGWWMV), 174–194 (LATHLVMACLIFAGCMWIMRG), and 210–230 (GFAAAIAIFSLFQIYLGALVA). His274 contacts heme. 3 helical membrane-spanning segments follow: residues 276–296 (IGAYTLFALTLINMVIALRAA), 305–325 (AILLFVLVTLQAAIGIATLLM), and 327–347 (VPLHWGLLHQAGALVVFGFAV). His335 provides a ligand contact to heme.

It belongs to the COX15/CtaA family. Type 2 subfamily. As to quaternary structure, interacts with CtaB. Heme b is required as a cofactor.

The protein localises to the cell membrane. The catalysed reaction is Fe(II)-heme o + 2 A + H2O = Fe(II)-heme a + 2 AH2. It functions in the pathway porphyrin-containing compound metabolism; heme A biosynthesis; heme A from heme O: step 1/1. Functionally, catalyzes the conversion of heme O to heme A by two successive hydroxylations of the methyl group at C8. The first hydroxylation forms heme I, the second hydroxylation results in an unstable dihydroxymethyl group, which spontaneously dehydrates, resulting in the formyl group of heme A. This is Heme A synthase from Rhizobium johnstonii (strain DSM 114642 / LMG 32736 / 3841) (Rhizobium leguminosarum bv. viciae).